The primary structure comprises 89 residues: Small ribosomal subunit protein uS17 (89 aa).

It belongs to the universal ribosomal protein uS17 family. Part of the 30S ribosomal subunit.

Functionally, one of the primary rRNA binding proteins, it binds specifically to the 5'-end of 16S ribosomal RNA. The polypeptide is Small ribosomal subunit protein uS17 (Phytoplasma mali (strain AT)).